A 631-amino-acid polypeptide reads, in one-letter code: DNA mismatch repair protein MutL (631 aa).

Residues 389 to 423 are disordered; that stretch reads GEREASRQAGGQRVQETQMSSYGSGQSGGRGRSYA.

Belongs to the DNA mismatch repair MutL/HexB family.

Its function is as follows. This protein is involved in the repair of mismatches in DNA. It is required for dam-dependent methyl-directed DNA mismatch repair. May act as a 'molecular matchmaker', a protein that promotes the formation of a stable complex between two or more DNA-binding proteins in an ATP-dependent manner without itself being part of a final effector complex. The polypeptide is DNA mismatch repair protein MutL (Shewanella loihica (strain ATCC BAA-1088 / PV-4)).